A 164-amino-acid polypeptide reads, in one-letter code: Cyclin-dependent kinase inhibitor 1 (164 aa).

An N-acetylserine modification is found at Ser2. Ser2 is covalently cross-linked (Glycyl serine ester (Ser-Gly) (interchain with G-Cter in ubiquitin)). The segment at 13–41 adopts a C4-type zinc-finger fold; sequence HGSKACRRLFGPVDSEQLRRDCDALMAGC. The tract at residues 17–24 is required for binding cyclins; sequence ACRRLFGP. A required for binding CDKs region spans residues 53–58; it reads FVTETP. The segment at 80 to 164 is disordered; that stretch reads AGPRGGRDDL…RRLIFSKRKP (85 aa). A Phosphoserine; by GSK3-beta modification is found at Ser114. The residue at position 130 (Ser130) is a Phosphoserine. The short motif at 140 to 164 is the PIP-box K+4 motif element; that stretch reads RKRRQTSMTDFYHSKRRLIFSKRKP. The Nuclear localization signal signature appears at 141–156; the sequence is KRRQTSMTDFYHSKRR. A Phosphothreonine; by PKA, PKB/AKT1, PIM1 and PIM2 modification is found at Thr145. Ser146 carries the post-translational modification Phosphoserine; by PKC and NUAK1. The interaction with TRIM39 stretch occupies residues 152–164; that stretch reads HSKRRLIFSKRKP. Residues 153–164 are compositionally biased toward basic residues; sequence SKRRLIFSKRKP. Ser160 carries the phosphoserine modification.

Belongs to the CDI family. Interacts with HDAC1; the interaction is prevented by competitive binding of C10orf90/FATS to HDAC1 facilitating acetylation and protein stabilization of CDKN1A/p21. Interacts with MKRN1. Interacts with PSMA3. Interacts with PCNA. Component of the ternary complex, cyclin D-CDK4-CDKN1A. Interacts (via its N-terminal domain) with CDK4; the interaction promotes the assembly of the cyclin D-CDK4 complex, its nuclear translocation and promotes the cyclin D-dependent enzyme activity of CDK4. Binding to CDK2 leads to CDK2/cyclin E inactivation at the G1-S phase DNA damage checkpoint, thereby arresting cells at the G1-S transition during DNA repair. Interacts with PIM1. Interacts with STK11 and NUAK1. Interacts with DTL and TRIM39. Interacts with PKP3; the interaction sequesters CDKN1A to the cytoplasm thereby repressing its role as an inhibitor of CDK4- and CDK6-driven RB1 phosphorylation. Phosphorylation of Thr-145 by Akt or of Ser-146 by PKC impairs binding to PCNA. Phosphorylation at Ser-114 by GSK3-beta enhances ubiquitination by the DCX(DTL) complex. Phosphorylation of Thr-145 by PIM2 enhances protein stability and inhibits cell proliferation. Phosphorylation of Thr-145 by PIM1 results in the relocation of CDKN1A to the cytoplasm and enhanced CDKN1A protein stability. UV radiation-induced phosphorylation at Ser-146 by NUAK1 leads to its degradation. In terms of processing, ubiquitinated by MKRN1; leading to polyubiquitination and 26S proteasome-dependent degradation. Ubiquitinated by the DCX(DTL) complex, also named CRL4(CDT2) complex, leading to its degradation during S phase or following UV irradiation. Ubiquitination by the DCX(DTL) complex is essential to control replication licensing and is PCNA-dependent: interacts with PCNA via its PIP-box, while the presence of the containing the 'K+4' motif in the PIP box, recruit the DCX(DTL) complex, leading to its degradation. Ubiquitination at Ser-2 leads to degradation by the proteasome pathway. Ubiquitinated by RNF114; leading to proteasomal degradation. Post-translationally, acetylation leads to protein stability. Acetylated in vitro on Lys-141, Lys-154, Lys-161 and Lys-163. Deacetylation by HDAC1 is prevented by competitive binding of C10orf90/FATS to HDAC1.

Its subcellular location is the cytoplasm. It is found in the nucleus. In terms of biological role, may be involved in p53/TP53 mediated inhibition of cellular proliferation in response to DNA damage. Binds to and inhibits cyclin-dependent kinase activity, preventing phosphorylation of critical cyclin-dependent kinase substrates and blocking cell cycle progression. Functions in the nuclear localization and assembly of cyclin D-CDK4 complex and promotes its kinase activity towards RB1. At higher stoichiometric ratios, inhibits the kinase activity of the cyclin D-CDK4 complex. Inhibits DNA synthesis by DNA polymerase delta by competing with POLD3 for PCNA binding. Plays an important role in controlling cell cycle progression and DNA damage-induced G2 arrest. Negatively regulates the CDK4- and CDK6-driven phosphorylation of RB1 in keratinocytes, thereby resulting in the release of E2F1 and subsequent transcription of E2F1-driven G1/S phase promoting genes. This chain is Cyclin-dependent kinase inhibitor 1 (CDKN1A), found in Felis catus (Cat).